A 352-amino-acid chain; its full sequence is Vacuolar protein sorting-associated protein 37C (352 aa).

Residue Ser29 is modified to Phosphoserine. Residues Val78–Ala167 enclose the VPS37 C-terminal domain. Residues Ala162 to Tyr352 are disordered. Pro residues-rich tracts occupy residues Lys173 to Thr185, Tyr202 to Pro213, and Pro319 to Thr336.

Belongs to the VPS37 family. As to quaternary structure, component of the ESCRT-I complex (endosomal sorting complex required for transport I) which consists of TSG101, VPS28, a VPS37 protein (VPS37A to -D) and MVB12A or MVB12B in a 1:1:1:1 stoichiometry. Interacts with TSG101, VPS28, MVB12A and MVB12B. Component of the ESCRT-I complex (endosomal sorting complex required for transport I) which consists of TSG101, VPS28, a VPS37 protein (VPS37A to -D) and UBAP1 in a 1:1:1:1 stoichiometry. Interacts with HGS and STAM2. Interacts with CEP55. Post-translationally, phosphorylated by TBK1.

The protein localises to the late endosome membrane. Component of the ESCRT-I complex, a regulator of vesicular trafficking process. Required for the sorting of endocytic ubiquitinated cargos into multivesicular bodies. May be involved in cell growth and differentiation. The sequence is that of Vacuolar protein sorting-associated protein 37C (Vps37c) from Mus musculus (Mouse).